Consider the following 330-residue polypeptide: Heat-inducible transcription repressor HrcA (330 aa).

This sequence belongs to the HrcA family.

Negative regulator of class I heat shock genes (grpE-dnaK-dnaJ and groELS operons). Prevents heat-shock induction of these operons. The protein is Heat-inducible transcription repressor HrcA of Synechococcus sp. (strain RCC307).